We begin with the raw amino-acid sequence, 139 residues long: Small ribosomal subunit protein uS11 (139 aa).

Disordered regions lie at residues 1–33 and 118–139; these read MPPA…AAHI and GAIS…RRRV. A compositionally biased stretch (basic residues) spans 14 to 23; that stretch reads KGQKTRRREK.

It belongs to the universal ribosomal protein uS11 family. Part of the 30S ribosomal subunit. Interacts with proteins S7 and S18. Binds to IF-3.

Functionally, located on the platform of the 30S subunit, it bridges several disparate RNA helices of the 16S rRNA. Forms part of the Shine-Dalgarno cleft in the 70S ribosome. This chain is Small ribosomal subunit protein uS11, found in Mycobacterium tuberculosis (strain ATCC 25177 / H37Ra).